Consider the following 478-residue polypeptide: MARKTLRARRFFSLIFPFFFITSVYAEQTPVSAKTVTVEAKNETFAPQHPDQYQSWKATSEQSAREDALAEDPRLVILWAGYPFSRDYNKPRGHAYAVTDVRETLRTGAPKTAEDGPLPMACWSCKSPDVARLIQQEGEDGYFHGKWARGGPEIVNDLGCADCHNTASDDFAQGKPALTLSRPYAERAMEAIGKPFEKAGRFDQQSMVCGQCHVEYYFDGKNKAVKFPWDEGMKVENMEQYYDAIAFSDWTNSLSRTPMLKAQHPEYETWSAGIHGKNNVTCIDCHMPKVQNAEGKLYTDHKIGNPFDNFAQTCANCHTQDKASLQKVVAERKQAIHDLKIKVEDQLVHAHFEAKAAWDAGATDAEMKPILNDIRHAQWRWDLAIASHGIHMHAPEEGLRMLGSAMDKAADARTKLARLLATKGITHEIPLPDISTKEKAQKAIGLNMQQINAEKQDFLKTVVPQWEDQARKNGLLSQ.

Positions M1–A26 are cleaved as a signal peptide. H94 is a heme c binding site. Positions 122, 125, and 126 each coordinate heme. The heme c site is built by C160, C163, H164, C209, C212, and H213. Ca(2+) contacts are provided by E215, Y216, K261, and Q263. A substrate-binding site is contributed by Y216. H264 contacts substrate. Positions 275, 282, 285, 286, 301, 314, 317, 318, and 393 each coordinate heme c.

It belongs to the cytochrome c-552 family. Ca(2+) is required as a cofactor. Heme c serves as cofactor.

The protein localises to the periplasm. It catalyses the reaction 6 Fe(III)-[cytochrome c] + NH4(+) + 2 H2O = 6 Fe(II)-[cytochrome c] + nitrite + 8 H(+). It participates in nitrogen metabolism; nitrate reduction (assimilation). Functionally, catalyzes the reduction of nitrite to ammonia, consuming six electrons in the process. The protein is Cytochrome c-552 of Salmonella paratyphi C (strain RKS4594).